Reading from the N-terminus, the 405-residue chain is MEGESTLGVLSGFVLGALTFQHLNTDSDTEGLLLGEMKGEAKNSITDSQMDSVKVVYTIDIQKYIPCYRLFSFYNSLGEVNEHALKKILSNVKKTVVGWYKFRRHSDQIMTFREQLLHRNLQTHLSSPELVFLLLTPSITTESCCTHCLEHGLYKPQSGLFHKVPLVVTNLGMSDQLGYKTESVSCTSTVFSRAVRTYSSQFFNEDGSLKEVRKINEMYAAIQEELKTICQKVEQSEREVEKLLMDVNRLKEVRKKQQAQAKGAGEKSQNHPQENILLCQALRTFFPESRVLHSCVISLKNRHISHSGCNTDHHLDVVDKLTLMVEYVYSPEASPAPAAPLSKRKALDTQDQWPAKRPRLLESESRPGPAFRGSHQDKASSSSLDIDTEVGSPEDDTDYPRSPTF.

The MPN domain occupies 7–154; the sequence is LGVLSGFVLG…CTHCLEHGLY (148 aa). Residue Ser-48 is modified to Phosphoserine. Residues 208–262 adopt a coiled-coil conformation; sequence SLKEVRKINEMYAAIQEELKTICQKVEQSEREVEKLLMDVNRLKEVRKKQQAQAK. The tract at residues 333-405 is disordered; sequence ASPAPAAPLS…DTDYPRSPTF (73 aa). Residues Ser-382, Ser-383, Ser-392, and Ser-402 each carry the phosphoserine modification. Residues 386–397 show a composition bias toward acidic residues; the sequence is IDTEVGSPEDDT. A pSXXF motif motif is present at residues 402-405; sequence SPTF.

This sequence belongs to the FAM175 family. Abraxas subfamily. As to quaternary structure, component of the ARISC complex, at least composed of UIMC1/RAP80, ABRAXAS1, BRCC3/BRCC36, BABAM2 and BABAM1/NBA1. Component of the BRCA1-A complex, at least composed of the BRCA1, BARD1, UIMC1/RAP80, ABRAXAS1, BRCC3/BRCC36, BABAM2 and BABAM1/NBA1. In the complex, interacts directly with UIMC1/RAP80, BRCC3/BRCC36 and BABAM2. Homodimer. Interacts directly (when phosphorylated at Ser-402) with BRCA1. The phosphorylated homodimer can interact directly with two BRCA1 chains, giving rise to a heterotetramer. Binds polyubiquitin. Post-translationally, phosphorylation of Ser-402 of the pSXXF motif by ATM or ATR constitutes a specific recognition motif for the BRCT domain of BRCA1.

The protein resides in the nucleus. Functionally, involved in DNA damage response and double-strand break (DSB) repair. Component of the BRCA1-A complex, acting as a central scaffold protein that assembles the various components of the complex and mediates the recruitment of BRCA1. The BRCA1-A complex specifically recognizes 'Lys-63'-linked ubiquitinated histones H2A and H2AX at DNA lesion sites, leading to target the BRCA1-BARD1 heterodimer to sites of DNA damage at DSBs. This complex also possesses deubiquitinase activity that specifically removes 'Lys-63'-linked ubiquitin on histones H2A and H2AX. The chain is BRCA1-A complex subunit Abraxas 1 from Rattus norvegicus (Rat).